Reading from the N-terminus, the 158-residue chain is UPF0260 protein RHECIAT_CH0001358 (158 aa).

Belongs to the UPF0260 family.

This is UPF0260 protein RHECIAT_CH0001358 from Rhizobium etli (strain CIAT 652).